The chain runs to 201 residues: Cell division protein SepF (201 aa).

Positions M1–V94 are disordered. The segment covering V13 to E28 has biased composition (acidic residues). The span at P35–Q44 shows a compositional bias: low complexity. Residues S59–K88 are compositionally biased toward polar residues.

The protein belongs to the SepF family. In terms of assembly, homodimer. Interacts with FtsZ.

The protein resides in the cytoplasm. Functionally, cell division protein that is part of the divisome complex and is recruited early to the Z-ring. Probably stimulates Z-ring formation, perhaps through the cross-linking of FtsZ protofilaments. Its function overlaps with FtsA. In Staphylococcus saprophyticus subsp. saprophyticus (strain ATCC 15305 / DSM 20229 / NCIMB 8711 / NCTC 7292 / S-41), this protein is Cell division protein SepF.